Here is a 414-residue protein sequence, read N- to C-terminus: Cytochrome P450 GfsF (414 aa).

The interval 1 to 32 is disordered; it reads MTDTTLVEAGDPAEDAPEWPMKRDTGCPFDPP. Positions 75, 107, 111, 303, 361, and 363 each coordinate heme b.

The protein belongs to the cytochrome P450 family. Monomer. Heme b is required as a cofactor.

It participates in antibiotic biosynthesis. Involved in the synthesis of the 16-membered macrolide antibiotics FD-891 and FD-892. Consecutively catalyzes epoxidation of C8-C9 and then hydroxylation at C10 to convert 25-O-methyl-FD-892 to FD-891. Consecutively catalyzes epoxidation of C8-C9 and then hydroxylation at C10 to convert 8,9-epoxy-FD-892 to 25-O-demethyl-FD-891 as well as converting 25-oxo-FD-892 to 8,9-epoxy-25-oxo-FD-892 and 8,9-epoxy-10-hydroxy-25-oxo-FD-892. In vitro is furnished with P.putida putidaredoxin and putidaredoxin reductase to provide the required two-electron reduction. The sequence is that of Cytochrome P450 GfsF from Streptomyces halstedii.